Consider the following 170-residue polypeptide: ATP synthase subunit b (170 aa).

Residues 22–44 traverse the membrane as a helical segment; that stretch reads IINLAVVVFGLYKFLPGFLGKIL.

The protein belongs to the ATPase B chain family. As to quaternary structure, F-type ATPases have 2 components, F(1) - the catalytic core - and F(0) - the membrane proton channel. F(1) has five subunits: alpha(3), beta(3), gamma(1), delta(1), epsilon(1). F(0) has four main subunits: a(1), b(1), b'(1) and c(10-14). The alpha and beta chains form an alternating ring which encloses part of the gamma chain. F(1) is attached to F(0) by a central stalk formed by the gamma and epsilon chains, while a peripheral stalk is formed by the delta, b and b' chains.

The protein resides in the cellular thylakoid membrane. Functionally, f(1)F(0) ATP synthase produces ATP from ADP in the presence of a proton or sodium gradient. F-type ATPases consist of two structural domains, F(1) containing the extramembraneous catalytic core and F(0) containing the membrane proton channel, linked together by a central stalk and a peripheral stalk. During catalysis, ATP synthesis in the catalytic domain of F(1) is coupled via a rotary mechanism of the central stalk subunits to proton translocation. Its function is as follows. Component of the F(0) channel, it forms part of the peripheral stalk, linking F(1) to F(0). The polypeptide is ATP synthase subunit b (Prochlorococcus marinus (strain NATL1A)).